The sequence spans 172 residues: Centrin-1 (172 aa).

Residues 1 to 31 (MASGFKKPSAASTGQKRKVAPKPELTEDQKQ) are disordered. EF-hand domains follow at residues 28 to 63 (DQKQ…LGFE), 64 to 99 (PRKE…KMSE), 101 to 136 (DTKE…LGEN), and 137 to 172 (LTDE…TSLY). Residues Asp41, Asp43, Ser45, Thr47, and Glu52 each contribute to the Ca(2+) site. Positions 150, 152, 154, 156, and 161 each coordinate Ca(2+).

The protein belongs to the centrin family. As to quaternary structure, monomer. Interacts with CIMAP3. Interacts with USP49.

Its subcellular location is the cytoplasm. It localises to the cytoskeleton. The protein localises to the microtubule organizing center. It is found in the centrosome. The protein resides in the cell projection. Its subcellular location is the cilium. In terms of biological role, plays a fundamental role in microtubule-organizing center structure and function. Plays a role in sperm cilia formation. This is Centrin-1 from Homo sapiens (Human).